The following is a 463-amino-acid chain: MQSQDYKKRLKLQIIIILSIAVMSCGVPNVPTALSSLLERESIRVGTVYGAGTFYNGAEGPQGFEYELLAGFADYLGVTLDLYPFYSYEVMLEQLEEGNLDIVATGDAVTPALKRRFAYGPAYQRVEQELVFQAGATRPRDLAELDSPIIAVAGSSQAHLLSNLFKRLSEEEDEAVQTQLITTEDSDSEELLQQVANGDIAYTVADSNRLALQRRRYPNLAVARTLNENMPMAWALPLQQDDSVKAALIEYFGTVHQSGWFTVLEDKYFGHIRQFDYVDSRAFNYAAESTLTQYKSLFQKYAGDLDWRLLAAMSYQESHWNSDAISRTGVRGLMMLTLATASDWNVDDRTDPEQSIRGGSRYFASLLNRIPARISEPDRTWMAMASYNIGMGHLEDARILTEQQGGNPDLWVDVKRRLPQLRQKKYYRTTRYGYARGDEALQYVENIRRYYDSLVWLDEQGKI.

The signal sequence occupies residues 1–33; the sequence is MQSQDYKKRLKLQIIIILSIAVMSCGVPNVPTA. The non-LT domain stretch occupies residues 34–272; it reads LSSLLERESI…VLEDKYFGHI (239 aa). Residues 273–463 are LT domain; it reads RQFDYVDSRA…LVWLDEQGKI (191 aa). Glu-317 is an active-site residue.

The protein in the N-terminal section; belongs to the bacterial solute-binding protein 3 family. It in the C-terminal section; belongs to the transglycosylase Slt family.

It is found in the cell outer membrane. It carries out the reaction Exolytic cleavage of the (1-&gt;4)-beta-glycosidic linkage between N-acetylmuramic acid (MurNAc) and N-acetylglucosamine (GlcNAc) residues in peptidoglycan, from either the reducing or the non-reducing ends of the peptidoglycan chains, with concomitant formation of a 1,6-anhydrobond in the MurNAc residue.. Functionally, murein-degrading enzyme that degrades murein glycan strands and insoluble, high-molecular weight murein sacculi, with the concomitant formation of a 1,6-anhydromuramoyl product. Lytic transglycosylases (LTs) play an integral role in the metabolism of the peptidoglycan (PG) sacculus. Their lytic action creates space within the PG sacculus to allow for its expansion as well as for the insertion of various structures such as secretion systems and flagella. This chain is Membrane-bound lytic murein transglycosylase F, found in Alteromonas mediterranea (strain DSM 17117 / CIP 110805 / LMG 28347 / Deep ecotype).